The primary structure comprises 162 residues: Heat shock protein beta-6 (162 aa).

Residues Met-1–Gly-72 are involved in stabilization of the HSPB1:HSBP6 heterodimer. A Phosphoserine modification is found at Ser-16. Positions Arg-56–Lys-162 constitute a sHSP domain. Position 66 is a deamidated glutamine (Gln-66). Phosphoserine is present on Ser-157.

It belongs to the small heat shock protein (HSP20) family. Homodimer. Small heat shock proteins form high molecular mass oligomers containing variable number of monomers; these oligomers display a very flexible quaternary structure easily exchanging their subunits. Heterooligomer with HSPB1; formed through oligomerization of HSPB1:HSBP6 dimers; subunit exchange leads to formation of at least two different heterooligomeric complexes, differing in variable quantities of HSPB1 and HSPB6 homodimers in addition to HSPB1:HSPB6 heterodimers. Heterooligomer with CRYAB; large heterooligomers consist of CRYAB homodimers and HSPB5:HSPB6 heterodimers but lacking HSPB6 homodimers. Interacts with BAG3. Interacts (phosphorylated) with YWHAZ. Interacts with PDE4A and PDE4D; required for maintenance of the non-phosphorylated state of HSPB6 under basal conditions. Interacts with KDR. Interacts with PRKD1. Phosphorylated at Ser-16 by PKA and probably PKD1K; required to protect cardiomyocytes from apoptosis.

It localises to the cytoplasm. The protein localises to the nucleus. Its subcellular location is the secreted. Functionally, small heat shock protein which functions as a molecular chaperone probably maintaining denatured proteins in a folding-competent state. Seems to have versatile functions in various biological processes. Plays a role in regulating muscle function such as smooth muscle vasorelaxation and cardiac myocyte contractility. May regulate myocardial angiogenesis implicating KDR. Overexpression mediates cardioprotection and angiogenesis after induced damage. Stabilizes monomeric YWHAZ thereby supporting YWHAZ chaperone-like activity. In Mus musculus (Mouse), this protein is Heat shock protein beta-6 (Hspb6).